The following is a 463-amino-acid chain: Chaperone SurA (463 aa).

The first 25 residues, 1–25, serve as a signal peptide directing secretion; the sequence is MTKPFSVVLASLLAITSTVSPLASA. PpiC domains are found at residues 174-276 and 289-388; these read GSQY…KLVE and VTEY…QRVG. Disordered stretches follow at residues 329-348 and 431-463; these read ATAK…GDLG and YRTG…KPTR. Residues 441-450 are compositionally biased toward low complexity; the sequence is ATAAPAKSPD. The segment covering 451-463 has biased composition (pro residues); it reads PAAPSPPPAKPTR.

The protein localises to the periplasm. The enzyme catalyses [protein]-peptidylproline (omega=180) = [protein]-peptidylproline (omega=0). Its function is as follows. Chaperone involved in the correct folding and assembly of outer membrane proteins. Recognizes specific patterns of aromatic residues and the orientation of their side chains, which are found more frequently in integral outer membrane proteins. May act in both early periplasmic and late outer membrane-associated steps of protein maturation. This chain is Chaperone SurA, found in Xanthomonas axonopodis pv. citri (strain 306).